A 287-amino-acid chain; its full sequence is Acetylglutamate kinase (287 aa).

Substrate is bound by residues 70-71 (GG), Arg-92, and Asn-184.

This sequence belongs to the acetylglutamate kinase family. ArgB subfamily.

It is found in the cytoplasm. The enzyme catalyses N-acetyl-L-glutamate + ATP = N-acetyl-L-glutamyl 5-phosphate + ADP. It functions in the pathway amino-acid biosynthesis; L-arginine biosynthesis; N(2)-acetyl-L-ornithine from L-glutamate: step 2/4. Functionally, catalyzes the ATP-dependent phosphorylation of N-acetyl-L-glutamate. The polypeptide is Acetylglutamate kinase (Dinoroseobacter shibae (strain DSM 16493 / NCIMB 14021 / DFL 12)).